The primary structure comprises 233 residues: Small ribosomal subunit protein uS7m (233 aa).

The transit peptide at 1-28 (MAAPTAAGLCPRLRAWLPRLTQVRWSRY) directs the protein to the mitochondrion.

It belongs to the universal ribosomal protein uS7 family. In terms of assembly, component of the mitochondrial ribosome small subunit (28S) which comprises a 12S rRNA and about 30 distinct proteins.

Its subcellular location is the mitochondrion. This is Small ribosomal subunit protein uS7m (MRPS7) from Gallus gallus (Chicken).